Here is a 294-residue protein sequence, read N- to C-terminus: 4-hydroxy-tetrahydrodipicolinate synthase (294 aa).

Threonine 47 provides a ligand contact to pyruvate. The active-site Proton donor/acceptor is the tyrosine 135. Lysine 163 functions as the Schiff-base intermediate with substrate in the catalytic mechanism. Isoleucine 206 contributes to the pyruvate binding site.

Belongs to the DapA family. As to quaternary structure, homodimer.

The protein localises to the cytoplasm. It catalyses the reaction L-aspartate 4-semialdehyde + pyruvate = (2S,4S)-4-hydroxy-2,3,4,5-tetrahydrodipicolinate + H2O + H(+). Its pathway is amino-acid biosynthesis; L-lysine biosynthesis via DAP pathway; (S)-tetrahydrodipicolinate from L-aspartate: step 3/4. Catalyzes the condensation of (S)-aspartate-beta-semialdehyde [(S)-ASA] and pyruvate to 4-hydroxy-tetrahydrodipicolinate (HTPA). In Staphylococcus carnosus (strain TM300), this protein is 4-hydroxy-tetrahydrodipicolinate synthase.